The sequence spans 161 residues: Allophycocyanin alpha-B chain (161 aa).

Position 71 is an N4-methylasparagine (Asn71). Cys81 serves as a coordination point for (2R,3E)-phycocyanobilin.

It belongs to the phycobiliprotein family. Contains one covalently linked bilin chromophore.

The protein localises to the plastid. It is found in the chloroplast thylakoid membrane. Functionally, allophycocyanin is a photosynthetic bile pigment-protein complex with maximum absorption at approximately 650 nanometers. The protein is Allophycocyanin alpha-B chain (apcD) of Porphyra purpurea (Red seaweed).